We begin with the raw amino-acid sequence, 348 residues long: Competence protein ComGA (348 aa).

145–152 (GATGSGKT) provides a ligand contact to ATP.

Belongs to the GSP E family.

It is found in the cell membrane. Required for uptake of DNA by competent cells. This Halalkalibacterium halodurans (strain ATCC BAA-125 / DSM 18197 / FERM 7344 / JCM 9153 / C-125) (Bacillus halodurans) protein is Competence protein ComGA (comGA).